Consider the following 209-residue polypeptide: Large ribosomal subunit protein uL3 (209 aa).

Gln150 carries the post-translational modification N5-methylglutamine.

This sequence belongs to the universal ribosomal protein uL3 family. In terms of assembly, part of the 50S ribosomal subunit. Forms a cluster with proteins L14 and L19. In terms of processing, methylated by PrmB.

Functionally, one of the primary rRNA binding proteins, it binds directly near the 3'-end of the 23S rRNA, where it nucleates assembly of the 50S subunit. The sequence is that of Large ribosomal subunit protein uL3 from Cronobacter sakazakii (strain ATCC BAA-894) (Enterobacter sakazakii).